Consider the following 115-residue polypeptide: Holo-[acyl-carrier-protein] synthase (115 aa).

Residues Asp-8 and Glu-56 each contribute to the Mg(2+) site.

The protein belongs to the P-Pant transferase superfamily. AcpS family. The cofactor is Mg(2+).

The protein resides in the cytoplasm. The catalysed reaction is apo-[ACP] + CoA = holo-[ACP] + adenosine 3',5'-bisphosphate + H(+). Its function is as follows. Transfers the 4'-phosphopantetheine moiety from coenzyme A to a Ser of acyl-carrier-protein. This chain is Holo-[acyl-carrier-protein] synthase, found in Ureaplasma parvum serovar 3 (strain ATCC 27815 / 27 / NCTC 11736).